The primary structure comprises 211 residues: MSPNKHNLIAPETALIGRATSITPSLPHAVNGTILNDEKPSNYSEIIIGMGCFWGAERLFWNLPGIYSTAVGYSGGFTPNPTYEEVCSGKTGHSEVVRIIYDPLIISLEQILTLFWESHNPTQGMQQGNDIGTQYRSVIYTTTPNQLTYAQHSKQCYQQSLEQQQLESPITTEIEPAGTFYFAEDYHQQYLVKNPNGYCGLGGTGVCFIPL.

C52 is a catalytic residue.

This sequence belongs to the MsrA Met sulfoxide reductase family.

The enzyme catalyses L-methionyl-[protein] + [thioredoxin]-disulfide + H2O = L-methionyl-(S)-S-oxide-[protein] + [thioredoxin]-dithiol. The catalysed reaction is [thioredoxin]-disulfide + L-methionine + H2O = L-methionine (S)-S-oxide + [thioredoxin]-dithiol. Its function is as follows. Has an important function as a repair enzyme for proteins that have been inactivated by oxidation. Catalyzes the reversible oxidation-reduction of methionine sulfoxide in proteins to methionine. The polypeptide is Peptide methionine sulfoxide reductase MsrA (Photobacterium profundum (strain SS9)).